We begin with the raw amino-acid sequence, 135 residues long: MNSCKRFPRSARICLPSEYYVAFEQGRRYSSVLLRLHHLPTSGPVRLGLVVSRRVDIRAVNRNRIKRALREVMRQIAYKLVPGDYVVVVRQTAKDVSNAELSVALLSLLRRIGALPLASIDNAMLPFFERNCSRK.

This sequence belongs to the RnpA family. Consists of a catalytic RNA component (M1 or rnpB) and a protein subunit.

The enzyme catalyses Endonucleolytic cleavage of RNA, removing 5'-extranucleotides from tRNA precursor.. Its function is as follows. RNaseP catalyzes the removal of the 5'-leader sequence from pre-tRNA to produce the mature 5'-terminus. It can also cleave other RNA substrates such as 4.5S RNA. The protein component plays an auxiliary but essential role in vivo by binding to the 5'-leader sequence and broadening the substrate specificity of the ribozyme. The chain is Ribonuclease P protein component from Xylella fastidiosa (strain Temecula1 / ATCC 700964).